Reading from the N-terminus, the 335-residue chain is Ketol-acid reductoisomerase (NAD(P)(+)) (335 aa).

Residues 5–185 enclose the KARI N-terminal Rossmann domain; that stretch reads AKIYTDKDTT…GGTRAGAIET (181 aa). Residues 28 to 31, Arg-52, Ser-56, and 86 to 89 each bind NADP(+); these read YGSQ and DMAQ. Residue His-111 is part of the active site. Residue Gly-137 participates in NADP(+) binding. One can recognise a KARI C-terminal knotted domain in the interval 186–331; the sequence is TFKEETETDL…RRLKEIIERG (146 aa). Mg(2+) contacts are provided by Asp-194, Glu-198, Glu-230, and Glu-234. Residue Ser-255 coordinates substrate. Residues 301–335 are disordered; it reads GSPTLSKGLEEMDKSLEEQTGRRLKEIIERGRPKS. The span at 308-335 shows a compositional bias: basic and acidic residues; sequence GLEEMDKSLEEQTGRRLKEIIERGRPKS.

It belongs to the ketol-acid reductoisomerase family. The cofactor is Mg(2+).

It carries out the reaction (2R)-2,3-dihydroxy-3-methylbutanoate + NAD(+) = (2S)-2-acetolactate + NADH + H(+). The enzyme catalyses (2R)-2,3-dihydroxy-3-methylbutanoate + NADP(+) = (2S)-2-acetolactate + NADPH + H(+). It participates in amino-acid biosynthesis; L-isoleucine biosynthesis; L-isoleucine from 2-oxobutanoate: step 2/4. It functions in the pathway amino-acid biosynthesis; L-valine biosynthesis; L-valine from pyruvate: step 2/4. In terms of biological role, involved in the biosynthesis of branched-chain amino acids (BCAA). Catalyzes an alkyl-migration followed by a ketol-acid reduction of (S)-2-acetolactate (S2AL) to yield (R)-2,3-dihydroxy-isovalerate. In the isomerase reaction, S2AL is rearranged via a Mg-dependent methyl migration to produce 3-hydroxy-3-methyl-2-ketobutyrate (HMKB). In the reductase reaction, this 2-ketoacid undergoes a metal-dependent reduction by NADPH or NADH to yield (R)-2,3-dihydroxy-isovalerate. The polypeptide is Ketol-acid reductoisomerase (NAD(P)(+)) (Metallosphaera sedula (strain ATCC 51363 / DSM 5348 / JCM 9185 / NBRC 15509 / TH2)).